A 691-amino-acid polypeptide reads, in one-letter code: Threonine--tRNA ligase (691 aa).

The TGS domain maps to 1 to 69 (MSTPEITPAA…QQDVEVAAVP (69 aa)). Residues 268-574 (DHRRLGQELD…LLEHYAGAFP (307 aa)) are catalytic. Zn(2+) contacts are provided by C373, H424, and H551.

Belongs to the class-II aminoacyl-tRNA synthetase family. In terms of assembly, homodimer. It depends on Zn(2+) as a cofactor.

It localises to the cytoplasm. The enzyme catalyses tRNA(Thr) + L-threonine + ATP = L-threonyl-tRNA(Thr) + AMP + diphosphate + H(+). Its function is as follows. Catalyzes the attachment of threonine to tRNA(Thr) in a two-step reaction: L-threonine is first activated by ATP to form Thr-AMP and then transferred to the acceptor end of tRNA(Thr). Also edits incorrectly charged L-seryl-tRNA(Thr). This Corynebacterium jeikeium (strain K411) protein is Threonine--tRNA ligase.